Here is a 251-residue protein sequence, read N- to C-terminus: 14-3-3-like protein (251 aa).

It belongs to the 14-3-3 family.

This Fucus vesiculosus (Bladder wrack) protein is 14-3-3-like protein.